A 252-amino-acid chain; its full sequence is Uridylate kinase (252 aa).

23–26 (KLSG) lines the ATP pocket. Glycine 65 contacts UMP. Residues glycine 66 and arginine 70 each coordinate ATP. Residues aspartate 85 and 146–153 (LGAPFFST) each bind UMP. Residues threonine 173, glutamine 174, tyrosine 179, and aspartate 182 each coordinate ATP.

The protein belongs to the UMP kinase family. Homohexamer.

Its subcellular location is the cytoplasm. It catalyses the reaction UMP + ATP = UDP + ADP. It participates in pyrimidine metabolism; CTP biosynthesis via de novo pathway; UDP from UMP (UMPK route): step 1/1. Inhibited by UTP. Catalyzes the reversible phosphorylation of UMP to UDP. The sequence is that of Uridylate kinase from Thermobifida fusca (strain YX).